A 249-amino-acid polypeptide reads, in one-letter code: tRNA (guanine-N(1)-)-methyltransferase (249 aa).

S-adenosyl-L-methionine-binding positions include Gly-112 and 132–137 (LGDFVL).

Belongs to the RNA methyltransferase TrmD family. Homodimer.

The protein localises to the cytoplasm. The catalysed reaction is guanosine(37) in tRNA + S-adenosyl-L-methionine = N(1)-methylguanosine(37) in tRNA + S-adenosyl-L-homocysteine + H(+). Specifically methylates guanosine-37 in various tRNAs. This Geobacter sp. (strain M21) protein is tRNA (guanine-N(1)-)-methyltransferase.